The chain runs to 237 residues: Demethylmenaquinone methyltransferase (237 aa).

Residues Thr58, Asp79, and 106 to 107 (NA) contribute to the S-adenosyl-L-methionine site.

Belongs to the class I-like SAM-binding methyltransferase superfamily. MenG/UbiE family.

The enzyme catalyses a 2-demethylmenaquinol + S-adenosyl-L-methionine = a menaquinol + S-adenosyl-L-homocysteine + H(+). It functions in the pathway quinol/quinone metabolism; menaquinone biosynthesis; menaquinol from 1,4-dihydroxy-2-naphthoate: step 2/2. In terms of biological role, methyltransferase required for the conversion of demethylmenaquinol (DMKH2) to menaquinol (MKH2). The protein is Demethylmenaquinone methyltransferase of Listeria monocytogenes serotype 4a (strain HCC23).